The following is a 136-amino-acid chain: Transcription antitermination protein NusB (136 aa).

This sequence belongs to the NusB family.

Involved in transcription antitermination. Required for transcription of ribosomal RNA (rRNA) genes. Binds specifically to the boxA antiterminator sequence of the ribosomal RNA (rrn) operons. In Salinispora arenicola (strain CNS-205), this protein is Transcription antitermination protein NusB.